Consider the following 34-residue polypeptide: Cytochrome b6-f complex subunit 7 (34 aa).

A helical transmembrane segment spans residues 9 to 29; that stretch reads ALLSFGLIFVGWALGALLLKI.

Belongs to the PetM family. In terms of assembly, the 4 large subunits of the cytochrome b6-f complex are cytochrome b6, subunit IV (17 kDa polypeptide, PetD), cytochrome f and the Rieske protein, while the 4 small subunits are PetG, PetL, PetM and PetN. The complex functions as a dimer.

Its subcellular location is the cellular thylakoid membrane. In terms of biological role, component of the cytochrome b6-f complex, which mediates electron transfer between photosystem II (PSII) and photosystem I (PSI), cyclic electron flow around PSI, and state transitions. This is Cytochrome b6-f complex subunit 7 from Nostoc sp. (strain PCC 7120 / SAG 25.82 / UTEX 2576).